The chain runs to 91 residues: Small ribosomal subunit protein bS18 (91 aa).

The disordered stretch occupies residues 1–21 (MSDERTPQRSSGPRKKRPFQR). Over residues 12–21 (GPRKKRPFQR) the composition is skewed to basic residues.

Belongs to the bacterial ribosomal protein bS18 family. Part of the 30S ribosomal subunit. Forms a tight heterodimer with protein bS6.

In terms of biological role, binds as a heterodimer with protein bS6 to the central domain of the 16S rRNA, where it helps stabilize the platform of the 30S subunit. The chain is Small ribosomal subunit protein bS18 from Geotalea uraniireducens (strain Rf4) (Geobacter uraniireducens).